We begin with the raw amino-acid sequence, 277 residues long: MNNSHPTTKSHLFHIVDPSPWPILTSFALLILVAGGVSFMHSYKFNHYILAFGVISVAYCLYSWWRDVIKEGIIDHSHTEPVRHGLRIGMALFILTEIMFFGVFFASFFKSSLSPVGLLDGVWVIKQGVWPPPNIKVFDPFDIPFINTLILLLSGTTVTWAHYALEERNQKDCVTALGLTIILGIFFTCMQAYEYYHAAFKFTDGIYPSNFYLATGFHGAHVIIGTIFLIVCCFRARRGDFAIKNNGHLGFEFAAWYWHFVDVVWLFLFTFVYIFGS.

6 consecutive transmembrane segments (helical) span residues 20–40, 45–65, 88–108, 173–193, 211–231, and 255–275; these read PWPI…VSFM, FNHY…YSWW, IGMA…FASF, CVTA…MQAY, FYLA…FLIV, and AWYW…VYIF.

The protein belongs to the cytochrome c oxidase subunit 3 family.

The protein resides in the cell membrane. The catalysed reaction is 4 Fe(II)-[cytochrome c] + O2 + 8 H(+)(in) = 4 Fe(III)-[cytochrome c] + 2 H2O + 4 H(+)(out). This chain is Probable cytochrome c oxidase subunit 3 (ctaE), found in Rickettsia bellii (strain RML369-C).